Reading from the N-terminus, the 845-residue chain is Probable inorganic carbon transporter subunit DabA (845 aa).

A disordered region spans residues 1–20; that stretch reads MPMASGDESMSARSENPVQS. Zn(2+)-binding residues include Cys-345, Asp-347, His-516, and Cys-531.

The protein belongs to the inorganic carbon transporter (TC 9.A.2) DabA family. In terms of assembly, forms a complex with DabB. Zn(2+) is required as a cofactor.

It is found in the cell inner membrane. Part of an energy-coupled inorganic carbon pump. The chain is Probable inorganic carbon transporter subunit DabA from Azotobacter vinelandii (strain DJ / ATCC BAA-1303).